A 231-amino-acid chain; its full sequence is ATP phosphoribosyltransferase (231 aa).

This sequence belongs to the ATP phosphoribosyltransferase family. Short subfamily. In terms of assembly, heteromultimer composed of HisG and HisZ subunits.

The protein resides in the cytoplasm. The enzyme catalyses 1-(5-phospho-beta-D-ribosyl)-ATP + diphosphate = 5-phospho-alpha-D-ribose 1-diphosphate + ATP. Its pathway is amino-acid biosynthesis; L-histidine biosynthesis; L-histidine from 5-phospho-alpha-D-ribose 1-diphosphate: step 1/9. Its function is as follows. Catalyzes the condensation of ATP and 5-phosphoribose 1-diphosphate to form N'-(5'-phosphoribosyl)-ATP (PR-ATP). Has a crucial role in the pathway because the rate of histidine biosynthesis seems to be controlled primarily by regulation of HisG enzymatic activity. The chain is ATP phosphoribosyltransferase from Psychrobacter arcticus (strain DSM 17307 / VKM B-2377 / 273-4).